The chain runs to 333 residues: Anthranilate phosphoribosyltransferase (333 aa).

Residues Gly81, 84–85 (GD), Thr89, 91–94 (NIST), 109–117 (KHGNRSVSS), and Ala121 each bind 5-phospho-alpha-D-ribose 1-diphosphate. An anthranilate-binding site is contributed by Gly81. Ser93 lines the Mg(2+) pocket. Asn112 serves as a coordination point for anthranilate. Arg167 serves as a coordination point for anthranilate. Positions 225 and 226 each coordinate Mg(2+).

This sequence belongs to the anthranilate phosphoribosyltransferase family. In terms of assembly, homodimer. Requires Mg(2+) as cofactor.

It catalyses the reaction N-(5-phospho-beta-D-ribosyl)anthranilate + diphosphate = 5-phospho-alpha-D-ribose 1-diphosphate + anthranilate. Its pathway is amino-acid biosynthesis; L-tryptophan biosynthesis; L-tryptophan from chorismate: step 2/5. Functionally, catalyzes the transfer of the phosphoribosyl group of 5-phosphorylribose-1-pyrophosphate (PRPP) to anthranilate to yield N-(5'-phosphoribosyl)-anthranilate (PRA). The protein is Anthranilate phosphoribosyltransferase of Haemophilus influenzae (strain 86-028NP).